A 426-amino-acid polypeptide reads, in one-letter code: D-tagatose-1,6-bisphosphate aldolase subunit KbaZ (426 aa).

Belongs to the GatZ/KbaZ family. KbaZ subfamily. As to quaternary structure, forms a complex with KbaY.

Its pathway is carbohydrate metabolism; D-tagatose 6-phosphate degradation; D-glyceraldehyde 3-phosphate and glycerone phosphate from D-tagatose 6-phosphate: step 2/2. In terms of biological role, component of the tagatose-1,6-bisphosphate aldolase KbaYZ that is required for full activity and stability of the Y subunit. Could have a chaperone-like function for the proper and stable folding of KbaY. When expressed alone, KbaZ does not show any aldolase activity. This is D-tagatose-1,6-bisphosphate aldolase subunit KbaZ from Escherichia coli (strain 55989 / EAEC).